We begin with the raw amino-acid sequence, 486 residues long: Siroheme synthase (486 aa).

The tract at residues 1 to 204 (MNYLPIFVDL…HQIEQAEALV (204 aa)) is precorrin-2 dehydrogenase /sirohydrochlorin ferrochelatase. NAD(+) contacts are provided by residues 22–23 (HV) and 43–44 (EK). S128 bears the Phosphoserine mark. Residues 216–486 (GEVSLVGAGP…NKETHWKQAA (271 aa)) are uroporphyrinogen-III C-methyltransferase. P225 serves as a coordination point for S-adenosyl-L-methionine. D248 acts as the Proton acceptor in catalysis. K270 serves as the catalytic Proton donor. Residues 301 to 303 (GGD), V306, 331 to 332 (TA), M383, and G412 each bind S-adenosyl-L-methionine.

It in the N-terminal section; belongs to the precorrin-2 dehydrogenase / sirohydrochlorin ferrochelatase family. The protein in the C-terminal section; belongs to the precorrin methyltransferase family.

The catalysed reaction is uroporphyrinogen III + 2 S-adenosyl-L-methionine = precorrin-2 + 2 S-adenosyl-L-homocysteine + H(+). The enzyme catalyses precorrin-2 + NAD(+) = sirohydrochlorin + NADH + 2 H(+). It catalyses the reaction siroheme + 2 H(+) = sirohydrochlorin + Fe(2+). The protein operates within cofactor biosynthesis; adenosylcobalamin biosynthesis; precorrin-2 from uroporphyrinogen III: step 1/1. It participates in cofactor biosynthesis; adenosylcobalamin biosynthesis; sirohydrochlorin from precorrin-2: step 1/1. Its pathway is porphyrin-containing compound metabolism; siroheme biosynthesis; precorrin-2 from uroporphyrinogen III: step 1/1. It functions in the pathway porphyrin-containing compound metabolism; siroheme biosynthesis; siroheme from sirohydrochlorin: step 1/1. The protein operates within porphyrin-containing compound metabolism; siroheme biosynthesis; sirohydrochlorin from precorrin-2: step 1/1. Its function is as follows. Multifunctional enzyme that catalyzes the SAM-dependent methylations of uroporphyrinogen III at position C-2 and C-7 to form precorrin-2 via precorrin-1. Then it catalyzes the NAD-dependent ring dehydrogenation of precorrin-2 to yield sirohydrochlorin. Finally, it catalyzes the ferrochelation of sirohydrochlorin to yield siroheme. The protein is Siroheme synthase of Actinobacillus pleuropneumoniae serotype 7 (strain AP76).